Here is a 687-residue protein sequence, read N- to C-terminus: Acetolactate synthase catalytic subunit, mitochondrial (687 aa).

The transit peptide at 1-90 (MIRQSTLKNF…AEPDMDTSFV (90 aa)) directs the protein to the mitochondrion. Positions 43 to 52 (YYSASPLPAS) are enriched in low complexity. Residues 43 to 68 (YYSASPLPASKRPEPAPSFNVDPLEQ) are disordered. Glu-139 provides a ligand contact to thiamine diphosphate. FAD-binding positions include Arg-241, 355–376 (HGCA…VGAR), and 407–426 (EVSP…VEGD). Residues 499–579 (QHQMWAAQHW…VKILILNNEE (81 aa)) form a thiamine pyrophosphate binding region. The Mg(2+) site is built by Asp-550, Asn-577, and Glu-579.

It belongs to the TPP enzyme family. As to quaternary structure, homodimer. The acetolactate synthase complex contains the catalytic subunit ILV2 and the regulatory small subunit ILV6. Mg(2+) is required as a cofactor. The cofactor is thiamine diphosphate.

The protein localises to the mitochondrion. It carries out the reaction 2 pyruvate + H(+) = (2S)-2-acetolactate + CO2. It catalyses the reaction 2-oxobutanoate + pyruvate + H(+) = (S)-2-ethyl-2-hydroxy-3-oxobutanoate + CO2. It participates in amino-acid biosynthesis; L-isoleucine biosynthesis; L-isoleucine from 2-oxobutanoate: step 1/4. Its pathway is amino-acid biosynthesis; L-valine biosynthesis; L-valine from pyruvate: step 1/4. The regulatory subunit ILV6 stimulates enzymatic activity seven- to tenfold and confers sensitivity to inhibition by valine and activation by ATP. In terms of biological role, catalytic subunit of mitochondrial acetolactate synthase, which catalyzes the first of a series of common steps in the biosynthesis of the branched-chain amino acids. Catalyzes the irreversible decarboxylation of pyruvate to a bound hydroxyethyl group that then condenses with either a second pyruvate molecule to form 2-acetolactate (AL) or with 2-ketobutyrate to form 2-aceto-2-hydroxybutyrate (AHB). The first product is the precursor for valine and leucine biosynthesis, while the second leads to isoleucine. The chain is Acetolactate synthase catalytic subunit, mitochondrial (ILV2) from Saccharomyces cerevisiae (strain ATCC 204508 / S288c) (Baker's yeast).